Here is a 133-residue protein sequence, read N- to C-terminus: MPSVDIDASQWQKLTQSREKQTTVITPLGMMMLEIQGELELPKDFASLARRDSPNEGRFSEQDGETLIRFGSLQIDGERATLFVGKKQRLLGKVTKLDVPMGIMHFNSKDNKVELVDVMKYKVIFKDRPLPIM.

It belongs to the CTF8 family. In terms of assembly, component of the CTF18-RFC complex, which consists of CTF18, CTF8, DSCC1, RFC2, RFC3, RFC4 and RFC5.

It localises to the nucleus. Essential for the fidelity of chromosome transmission. Required for the DNA replication block checkpoint. Component of the RFC-like complex CTF18-RFC which is required for efficient establishment of chromosome cohesion during S-phase and may load or unload POL30/PCNA. During a clamp loading circle, the RFC:clamp complex binds to DNA and the recognition of the double-stranded/single-stranded junction stimulates ATP hydrolysis by RFC. The complex presumably provides bipartite ATP sites in which one subunit supplies a catalytic site for hydrolysis of ATP bound to the neighboring subunit. Dissociation of RFC from the clamp leaves the clamp encircling DNA. The chain is Chromosome transmission fidelity protein 8 (CTF8) from Saccharomyces cerevisiae (strain ATCC 204508 / S288c) (Baker's yeast).